Consider the following 436-residue polypeptide: ATP-dependent RNA helicase SUB2 (436 aa).

The segment covering 1–16 (MSAEEDLIDYSDEELN) has biased composition (acidic residues). Positions 1–33 (MSAEEDLIDYSDEELNTNETAAPAADSNGKKGE) are disordered. Positions 52–80 (TGFRDFLLKPELLRAIGDCGFEHPSEVQQ) match the Q motif motif. One can recognise a Helicase ATP-binding domain in the interval 83–258 (IPQAMLGGDI…KKFMQNPTEH (176 aa)). ATP is bound at residue 96–103 (AKSGLGKT). The DEAD box signature appears at 205 to 208 (DECD). Residues 270–431 (GLQQYFVALE…EFPKDGIDAS (162 aa)) enclose the Helicase C-terminal domain.

It belongs to the DEAD box helicase family. DECD subfamily.

The protein localises to the nucleus. It carries out the reaction ATP + H2O = ADP + phosphate + H(+). ATP-binding RNA helicase involved in transcription elongation and required for the export of mRNA out of the nucleus. SUB2 also plays a role in pre-mRNA splicing and spliceosome assembly. May be involved in rDNA and telomeric silencing, and maintenance of genome integrity. The sequence is that of ATP-dependent RNA helicase SUB2 (SUB2) from Pyricularia oryzae (strain 70-15 / ATCC MYA-4617 / FGSC 8958) (Rice blast fungus).